We begin with the raw amino-acid sequence, 188 residues long: Elongation factor P (188 aa).

This sequence belongs to the elongation factor P family.

Its subcellular location is the cytoplasm. It functions in the pathway protein biosynthesis; polypeptide chain elongation. In terms of biological role, involved in peptide bond synthesis. Stimulates efficient translation and peptide-bond synthesis on native or reconstituted 70S ribosomes in vitro. Probably functions indirectly by altering the affinity of the ribosome for aminoacyl-tRNA, thus increasing their reactivity as acceptors for peptidyl transferase. The protein is Elongation factor P of Methylobacterium sp. (strain 4-46).